The primary structure comprises 84 residues: Gomesin (84 aa).

The first 23 residues, 1–23, serve as a signal peptide directing secretion; that stretch reads MNRTRLFACLLLAVLILVHESNA. A Pyrrolidone carboxylic acid modification is found at Gln-24. Intrachain disulfides connect Cys-25–Cys-38 and Cys-29–Cys-34. Arg-41 carries the arginine amide modification. Positions 42 to 84 are excised as a propeptide; it reads GKRSLDETNVGTSDVEKRAFDDSNVPSLVEERELEDEGSFIFD.

In hemocytes only, but not in all hemocytes observed.

It is found in the secreted. Functionally, active against several Gram-positive bacteria such as Bacillus spp, Staphylococcus spp and E.faecalis, several Gram-negative bacteria such as E.coli, K.pneumoniae, P.aeruginosa and Salmonella spp, filamentous fungi such as N.crassa, T.viridae and yeasts such as C.albicans. It is active against the parasite L.amazonensis as well. It shows hemolytic activity. This Acanthoscurria gomesiana (Tarantula spider) protein is Gomesin.